The chain runs to 87 residues: Small ribosomal subunit protein bS20 (87 aa).

This sequence belongs to the bacterial ribosomal protein bS20 family.

Binds directly to 16S ribosomal RNA. This is Small ribosomal subunit protein bS20 from Rickettsia bellii (strain OSU 85-389).